The following is a 213-amino-acid chain: N-(5'-phosphoribosyl)anthranilate isomerase (213 aa).

Belongs to the TrpF family.

The catalysed reaction is N-(5-phospho-beta-D-ribosyl)anthranilate = 1-(2-carboxyphenylamino)-1-deoxy-D-ribulose 5-phosphate. Its pathway is amino-acid biosynthesis; L-tryptophan biosynthesis; L-tryptophan from chorismate: step 3/5. This is N-(5'-phosphoribosyl)anthranilate isomerase from Roseiflexus sp. (strain RS-1).